Consider the following 291-residue polypeptide: Taste receptor type 2 member 16 (291 aa).

Met-1 is a topological domain (extracellular). The chain crosses the membrane as a helical span at residues 2 to 22 (IPIQLTVFFMIIYVLESLTII). Residues 23–41 (VQSSLIVAVLGREWLQVRR) lie on the Cytoplasmic side of the membrane. The helical transmembrane segment at 42–62 (LMPVDMILISLGISRFCLQWA) threads the bilayer. Residues 63 to 84 (SMLNNFCSYFNLNYVLCNLTIT) are Extracellular-facing. An N-linked (GlcNAc...) asparagine glycan is attached at Asn-80. The chain crosses the membrane as a helical span at residues 85–105 (WEFFNILTFWLNSLLTVFYCI). The Cytoplasmic portion of the chain corresponds to 106-125 (KASSFTHHIFLWLRWRILRL). A helical transmembrane segment spans residues 126–146 (FPWILLGSLMITCVTIIPSAI). Residues 147–182 (GNYIQIQLLTMEHLPRNSTVTDKLEKFHQYQFQAHT) are Extracellular-facing. N-linked (GlcNAc...) asparagine glycosylation occurs at Asn-163. Residues 183-203 (VALVIPFILFLASTILLMASL) traverse the membrane as a helical segment. Residues 204–228 (TKQIQHHSTGHCNPSMKAHFTALRS) lie on the Cytoplasmic side of the membrane. Residues 229 to 249 (LAVLFIVFTSYFLTILITIIG) traverse the membrane as a helical segment. Over 250–257 (TLFDKRCW) the chain is Extracellular. A helical membrane pass occupies residues 258–278 (LWVWEAFVYAFILMHSTSLML). At 279-291 (SSPTLKRILKGKC) the chain is on the cytoplasmic side.

It belongs to the G-protein coupled receptor T2R family. In terms of assembly, interacts with RTP3 and RTP4.

The protein localises to the cell membrane. Its function is as follows. Receptor that may play a role in the perception of bitterness and is gustducin-linked. May play a role in sensing the chemical composition of the gastrointestinal content. The activity of this receptor may stimulate alpha gustducin, mediate PLC-beta-2 activation and lead to the gating of TRPM5. In Pan paniscus (Pygmy chimpanzee), this protein is Taste receptor type 2 member 16 (TAS2R16).